The following is a 462-amino-acid chain: Iroquois-class homeodomain protein irx-1-B (462 aa).

Positions 121–183 (DPGRPKNATR…NARRRLKKEN (63 aa)) form a DNA-binding region, homeobox; TALE-type. Disordered regions lie at residues 191 to 302 (GKED…PHSK), 314 to 339 (SPDGALKSSPPPSQANHTSPQMQHPA), and 405 to 462 (SLSS…LPSA). Composition is skewed to acidic residues over residues 210-220 (EDDEEIDLESI) and 228-239 (NDGEQSNEEEDE). Residues 240 to 257 (KLDHFRHGEKVSLKKESE) show a composition bias toward basic and acidic residues. Positions 410-426 (RTPERTSPKHSDRENLP) are enriched in basic and acidic residues. A compositionally biased stretch (polar residues) spans 446 to 455 (FSQQEGTSRI).

It belongs to the TALE/IRO homeobox family.

The protein localises to the nucleus. Its function is as follows. Acts partially redundantly with other irx members in neural patterning. Required for formation of the posterior forebrain, midbrain, hindbrain, and to a lesser extent, spinal cord. Acts early in neural plate development to induce expression of some but not all proneural genes, and specify a neural precursor state. Also up-regulates repressors that prevent neuronal differentiation. Patterns the neuroectoderm in both the anterior/posterior and dorsal/ventral axes. Acts primarily as a transcriptional repressor during neural development, and binds to the bmp4 promoter to repress gene expression and thus mediate down-regulation of bmp4 by wnt signaling. Controls multiple processes through bmp4-repression including neural plate development, neural crest specification and Spemann organizer development. Involved in the specification of the preplacodal field at the anterior border of the neural plate. Regulates the genetic cascade of interactions that are necessary for positioning the isthmus organizer and the formation of the midbrain-hindbrain boundary. Required during at least two stages of pronephros kidney development; during neurula stages, maintains transcription of key renal genes to define the size and identity of the pronephric anlage, probably in part through regulation of bmp-signaling. Subsequently required for proper formation of the intermediate tubule segment of the pronephros. Acts principally as a transcriptional activator during pronephros development. This chain is Iroquois-class homeodomain protein irx-1-B (irx1-b), found in Xenopus laevis (African clawed frog).